A 96-amino-acid polypeptide reads, in one-letter code: Co-chaperonin GroES (96 aa).

Belongs to the GroES chaperonin family. Heptamer of 7 subunits arranged in a ring. Interacts with the chaperonin GroEL.

It localises to the cytoplasm. Its function is as follows. Together with the chaperonin GroEL, plays an essential role in assisting protein folding. The GroEL-GroES system forms a nano-cage that allows encapsulation of the non-native substrate proteins and provides a physical environment optimized to promote and accelerate protein folding. GroES binds to the apical surface of the GroEL ring, thereby capping the opening of the GroEL channel. In Geotalea uraniireducens (strain Rf4) (Geobacter uraniireducens), this protein is Co-chaperonin GroES.